The sequence spans 515 residues: MVVAYKHEPFTDFSVEANKLAFEEGLKKVESYLGQDYPLIIGGEKITTEDKIVSVNPANKEEVIGSVSKASRELAEKAMQVADETFQTWRKSKPEMRADILFRAAAIVRRRKHEFSAILVKEAGKPWNEADADTAEAIDFMEYYGRQMLKLKDGIPVESRPIEYNRFSYIPLGVGVIISPWNFPFAIMAGMTTAALVSGNTVLLKPASTTPVVAAKFMEVLEEAGLPAGVVNFIPGSGSEVGDYLVDHPRTRFISFTGSRDVGIRIYERAAKVHPGQIWLKRVIAEMGGKDTIVVDKEADLELAAKSIVASAFGFSGQKCSACSRAVIHEEVYDQVLNRAVELTKELTVGNPAEKGTNMGPVNDQAAFDKVMSYVAIGKEEGKIVAGGEGDDSKGWFIQPTIVADVAEDARLMKEEIFGPVVAFCKAKDFDHALAIANNTEYGLTGAVISNNRAHIEKAREDFHVGNLYFNRGCTGAIVGYQPFGGFNMSGTDSKAGGPDYLALHMQAKTTSEML.

Residues Glu-286 and Cys-320 contribute to the active site.

This sequence belongs to the aldehyde dehydrogenase family. RocA subfamily.

The enzyme catalyses L-glutamate 5-semialdehyde + NAD(+) + H2O = L-glutamate + NADH + 2 H(+). It participates in amino-acid degradation; L-proline degradation into L-glutamate; L-glutamate from L-proline: step 2/2. The polypeptide is 1-pyrroline-5-carboxylate dehydrogenase (Bacillus cytotoxicus (strain DSM 22905 / CIP 110041 / 391-98 / NVH 391-98)).